The chain runs to 540 residues: MAAAKAEMQLMSPLQISDPFGSFPHSPTMDNYPKLEEMMLSNGAPQFLGAAGAPEGSSGSSSGSSGGGGGGGGGSSSSNSNSSSAFNPQGEASEQPYEHLTAESFPDISLNNEKVLVETSYPSQTTRLPPITYTGRFSLEPAPNSGNTLWPEPLFSLVSGLVSMTNPPATSSSASSPAASSSASQSPPLSCAVQSNDSSPIYSAAPTFPTPNTDIFPEPQGQAFPGSAGPALQYPPPAYPGAKGGFQVPMIPDYLFPQQQGDLGLGTPDQKPFQGLESRTQQPSLTPLSTIKAFATQSGSQDLKALNSTYQSQLIKPSRMRKYPNRPSKTPPHERPYACPVESCDRRFSRSDELTRHIRIHTGQKPQCRISMRNFSRSDHLTTHIRTHTGEKPFACDICGRKFARSDERKRHTKIHLRQKDKKADKSAASAATSSLPSYPSPVATSYPSPATTSYPSPATTSYPSPVPTSYSSPGSSTYPSPVHNGFPSPSVATTYSSVPPAFPTQVSSFPSSAVTNSFSASTGLSDMTTTFSPRTIEIC.

2 disordered regions span residues Met1 to Phe105 and Val162 to Pro240. The span at Ser64–Ser75 shows a compositional bias: gly residues. The segment covering Pro167–Ser190 has biased composition (low complexity). A compositionally biased stretch (polar residues) spans Ala192–Ile201. A Glycyl lysine isopeptide (Lys-Gly) (interchain with G-Cter in SUMO2) cross-link involves residue Lys304. Residues Pro317–Tyr337 are disordered. The C2H2-type 1 zinc-finger motif lies at Tyr337–His361. The segment at Pro366–His388 adopts a C2H2-type 2; degenerate zinc-finger fold. The C2H2-type 3 zinc-finger motif lies at Phe394–His416. A disordered region spans residues Asp407–Pro482. A compositionally biased stretch (basic residues) spans Arg411–Asp421. A compositionally biased stretch (low complexity) spans Ser427–Pro482.

It belongs to the EGR C2H2-type zinc-finger protein family. As to quaternary structure, interacts with SNAI1 and SP1 upon 12-O-tetradecanoylphorbol-13-acetate (TPA) induction.

It localises to the nucleus. Its subcellular location is the cytoplasm. In terms of biological role, transcriptional regulator. Recognizes and binds to the DNA sequence 5'-GCG(T/G)GGGCG-3'(EGR-site) in the promoter region of target genes. Binds double-stranded target DNA, irrespective of the cytosine methylation status. Regulates the transcription of numerous target genes, and thereby plays an important role in regulating the response to growth factors, DNA damage, and ischemia. Plays a role in the regulation of cell survival, proliferation and cell death. Activates expression of p53/TP53 and TGFB1, and thereby helps prevent tumor formation. Required for normal progress through mitosis and normal proliferation of hepatocytes after partial hepatectomy. Mediates responses to ischemia and hypoxia; regulates the expression of proteins such as IL1B and CXCL2 that are involved in inflammatory processes and development of tissue damage after ischemia. Regulates biosynthesis of luteinizing hormone (LHB) in the pituitary. Regulates the amplitude of the expression rhythms of clock genes: BMAL1, PER2 and NR1D1 in the liver via the activation of PER1 (clock repressor) transcription. Regulates the rhythmic expression of core-clock gene BMAL1 in the suprachiasmatic nucleus (SCN). This is Early growth response protein 1 (EGR1) from Bos taurus (Bovine).